Here is a 194-residue protein sequence, read N- to C-terminus: Peptidyl-tRNA hydrolase (194 aa).

Tyrosine 16 provides a ligand contact to tRNA. Histidine 21 acts as the Proton acceptor in catalysis. The tRNA site is built by phenylalanine 67, asparagine 69, and asparagine 115.

The protein belongs to the PTH family. Monomer.

It is found in the cytoplasm. The catalysed reaction is an N-acyl-L-alpha-aminoacyl-tRNA + H2O = an N-acyl-L-amino acid + a tRNA + H(+). In terms of biological role, hydrolyzes ribosome-free peptidyl-tRNAs (with 1 or more amino acids incorporated), which drop off the ribosome during protein synthesis, or as a result of ribosome stalling. Catalyzes the release of premature peptidyl moieties from peptidyl-tRNA molecules trapped in stalled 50S ribosomal subunits, and thus maintains levels of free tRNAs and 50S ribosomes. In Salmonella agona (strain SL483), this protein is Peptidyl-tRNA hydrolase.